The primary structure comprises 1122 residues: Receptor-type guanylate cyclase gcy-5 (1122 aa).

Positions 1–19 (MRLLYFSMVLLWVLGASEC) are cleaved as a signal peptide. The Extracellular segment spans residues 20–486 (QVIPSSRRTL…CPVQFWDQYG (467 aa)). 7 N-linked (GlcNAc...) asparagine glycosylation sites follow: N252, N299, N344, N350, N378, N434, and N439. Residues 487-507 (VLIFVASIVLIFLICIMLMCF) traverse the membrane as a helical segment. The Cytoplasmic segment spans residues 508-1122 (GFMIRGRRAE…KSKMDTLKVV (615 aa)). Residues 536–562 (QKEKRKPNSRRSLQSGPSTITGESKMT) are disordered. The Protein kinase domain maps to 542–830 (PNSRRSLQSG…NTNLMDHVFN (289 aa)). Residues 545–559 (RRSLQSGPSTITGES) show a composition bias toward polar residues. The Guanylate cyclase domain occupies 888-1018 (TVLFSDVVKF…DTVNTASRME (131 aa)). Residues 1071 to 1122 (SDTKSLSTRTTPPITDENWPPQMKEDLKKRAVTPYPERQRSGKSKMDTLKVV) are disordered. Over residues 1074–1083 (KSLSTRTTPP) the composition is skewed to polar residues. The span at 1107–1122 (ERQRSGKSKMDTLKVV) shows a compositional bias: basic and acidic residues.

Belongs to the adenylyl cyclase class-4/guanylyl cyclase family. As to expression, expressed in both ASEL and ASER neurons during early embryonic stages and becomes specifically expressed in ASER neuron in early larval stage.

Its subcellular location is the cell membrane. It carries out the reaction GTP = 3',5'-cyclic GMP + diphosphate. Its function is as follows. Guanylate cyclase involved in the production of the second messenger cGMP. Unlike other guanylate cyclases expressed in ASE neurons, may not play a role in chemotaxis responses to salt ions mediated by ASE sensory neurons. This chain is Receptor-type guanylate cyclase gcy-5, found in Caenorhabditis elegans.